We begin with the raw amino-acid sequence, 272 residues long: Expansin-B16 (272 aa).

The first 25 residues, Met1–Ala25, serve as a signal peptide directing secretion. One can recognise an Expansin-like EG45 domain in the interval Gly63 to Lys173. Intrachain disulfides connect Cys66/Cys95, Cys98/Cys168, and Cys103/Cys109. Residues Phe186–Ser267 form the Expansin-like CBD domain.

This sequence belongs to the expansin family. Expansin B subfamily.

It is found in the secreted. It localises to the cell wall. The protein localises to the membrane. Functionally, may cause loosening and extension of plant cell walls by disrupting non-covalent bonding between cellulose microfibrils and matrix glucans. No enzymatic activity has been found. May be required for rapid internodal elongation in deepwater rice during submergence. This is Expansin-B16 (EXPB16) from Oryza sativa subsp. japonica (Rice).